Reading from the N-terminus, the 312-residue chain is Acetyl-coenzyme A carboxylase carboxyl transferase subunit alpha (312 aa).

The CoA carboxyltransferase C-terminal domain maps to N36–E286.

It belongs to the AccA family. As to quaternary structure, acetyl-CoA carboxylase is a heterohexamer composed of biotin carboxyl carrier protein (AccB), biotin carboxylase (AccC) and two subunits each of ACCase subunit alpha (AccA) and ACCase subunit beta (AccD).

It localises to the cytoplasm. It carries out the reaction N(6)-carboxybiotinyl-L-lysyl-[protein] + acetyl-CoA = N(6)-biotinyl-L-lysyl-[protein] + malonyl-CoA. The protein operates within lipid metabolism; malonyl-CoA biosynthesis; malonyl-CoA from acetyl-CoA: step 1/1. Component of the acetyl coenzyme A carboxylase (ACC) complex. First, biotin carboxylase catalyzes the carboxylation of biotin on its carrier protein (BCCP) and then the CO(2) group is transferred by the carboxyltransferase to acetyl-CoA to form malonyl-CoA. This chain is Acetyl-coenzyme A carboxylase carboxyl transferase subunit alpha, found in Campylobacter jejuni subsp. doylei (strain ATCC BAA-1458 / RM4099 / 269.97).